Consider the following 519-residue polypeptide: Dideacetyl fusicoccin A C-19 hydroxylase (519 aa).

The chain crosses the membrane as a helical span at residues 16 to 36 (LPVAPILFTALAATIGAFLLS). N-linked (GlcNAc...) asparagine glycosylation is found at N177, N327, N414, and N432. C454 is a heme binding site.

Belongs to the cytochrome P450 family. Heme is required as a cofactor.

The protein localises to the membrane. Its pathway is mycotoxin biosynthesis. Cytochrome P450 monooxygenase; part of the 2 gene clusters that mediate the biosynthesis of fusicoccins, diterpene glucosides that display phytohormone-like activity and function as potent activators of plasma membrane H(+)-ATPases in plants by modifying 14-3-3 proteins and cause the plant disease constriction canker. The first step in the pathway is performed by the fusicoccadiene synthase PaFS that possesses both prenyl transferase and terpene cyclase activity, converting isopentenyl diphosphate and dimethylallyl diphosphate into geranylgeranyl diphosphate (GGDP) and successively converting GGDP into fusicocca-2,10(14)-diene, a precursor for fusicoccin H. The second step is the oxidation at the C-8 position by the cytochrome P450 monooxygenase PaP450-2 to yield fusicocca-2,10(14)-diene-8-beta-ol. The cytochrome P450 monooxygenase PaP450-1 then catalyzes the hydroxylation at the C-16 position to produce fusicocca-2,10(14)-diene-8-beta,16-diol. The dioxygenase fc-dox then catalyzes the 16-oxydation of fusicocca-2,10(14)-diene-8-beta,16-diol to yield an aldehyde (8-beta-hydroxyfusicocca-1,10(14)-dien-16-al). The short-chain dehydrogenase/reductase fc-sdr catalyzes the reduction of the aldehyde to yield fusicocca-1,10(14)-diene-8-beta,16-diol. The next step is the hydroxylation at C-9 performed by the cytochrome P450 monooxygenase PaP450-3 that leads to fusicoccin H aglycon which is glycosylated to fusicoccin H by the O-glycosyltransferase PaGT. Hydroxylation at C-12 by the cytochrome P450 monooxygenase PaP450-4 leads then to the production of fusicoccin Q and is followed by methylation by the O-methyltransferase PaMT to yield fusicoccin P. Fusicoccin P is further converted to fusicoccin J via prenylation by the O-glucose prenyltransferase PaPT. Cytochrome P450 monooxygenase PaP450-5 then performs hydroxylation at C-19 to yield dideacetyl-fusicoccin A which is acetylated to 3'-O-deacetyl-fusicoccin A by the O-acetyltransferase PaAT-2. Finally, a another acetylation by the O-acetyltransferase PaAT-1 yields fusicoccin A. This is Dideacetyl fusicoccin A C-19 hydroxylase from Phomopsis amygdali (Fusicoccum amygdali).